Consider the following 748-residue polypeptide: Transcription factor hmgR (748 aa).

The zn(2)-C6 fungal-type DNA-binding region spans 24–59 (CISCRQRKAKCDLGTGPDGLPLGPPCAKCRREQKPC). Disordered regions lie at residues 108–142 (SQEDSMIESDSLPETEQHRSGHPVTSEGSSNQIDL) and 661–683 (RESTTRHSMVPPSYASATSDEHA).

It localises to the nucleus. In terms of biological role, transcription factor; part of the L-tyrosine degradation gene cluster that mediates the biosynthesis of the brownish pigment pyomelanin as an alternative melanin. Acts as a transcriptional activator for the genes of the tyrosine degradation cluster. This chain is Transcription factor hmgR, found in Aspergillus fumigatus (strain ATCC MYA-4609 / CBS 101355 / FGSC A1100 / Af293) (Neosartorya fumigata).